A 376-amino-acid polypeptide reads, in one-letter code: Growth/differentiation factor 8 (376 aa).

An N-terminal signal peptide occupies residues 1 to 24; that stretch reads MMQKLQMYVYIYLFMLIAAGPVDL. Positions 25-267 are excised as a propeptide; that stretch reads NEGSEREENV…VTDTPKRSRR (243 aa). N-linked (GlcNAc...) asparagine glycosylation is present at N72. Disulfide bonds link C273-C283, C282-C341, C310-C373, and C314-C375.

The protein belongs to the TGF-beta family. Homodimer; disulfide-linked. Interacts with WFIKKN2, leading to inhibit its activity. Interacts with FSTL3. Post-translationally, synthesized as large precursor molecule that undergoes proteolytic cleavage to generate an N-terminal propeptide and a disulfide linked C-terminal dimer, which is the biologically active molecule. The circulating form consists of a latent complex of the C-terminal dimer and other proteins, including its propeptide, which maintain the C-terminal dimer in a latent, inactive state. Ligand activation requires additional cleavage of the prodomain by a tolloid-like metalloproteinase. As to expression, expressed specifically in developing and adult skeletal muscle. Weak expression in adipose tissue.

The protein resides in the secreted. Acts specifically as a negative regulator of skeletal muscle growth. This chain is Growth/differentiation factor 8 (Mstn), found in Mus musculus (Mouse).